An 84-amino-acid polypeptide reads, in one-letter code: Putative membrane protein insertion efficiency factor (84 aa).

It belongs to the UPF0161 family.

The protein resides in the cell inner membrane. Its function is as follows. Could be involved in insertion of integral membrane proteins into the membrane. The chain is Putative membrane protein insertion efficiency factor from Nostoc sp. (strain PCC 7120 / SAG 25.82 / UTEX 2576).